The following is a 665-amino-acid chain: Probable potassium transport system protein Kup (665 aa).

The next 12 helical transmembrane spans lie at 15–35 (SFLI…LYVM), 48–68 (ITPD…TLLT), 100–120 (WLII…MLTP), 147–167 (IIII…HFGT), 173–193 (IFGP…IVNL), 219–239 (LGFF…ALYS), 251–271 (LTWP…AAWI), 292–312 (MMPS…AIIA), 348–368 (IYMP…VLYF), 378–398 (YGLS…NYLL), 403–423 (PLPI…SFLI), and 431–451 (KGGF…YIWI).

This sequence belongs to the HAK/KUP transporter (TC 2.A.72) family.

Its subcellular location is the cell membrane. The catalysed reaction is K(+)(in) + H(+)(in) = K(+)(out) + H(+)(out). In terms of biological role, transport of potassium into the cell. Likely operates as a K(+):H(+) symporter. The sequence is that of Probable potassium transport system protein Kup from Clostridium perfringens (strain ATCC 13124 / DSM 756 / JCM 1290 / NCIMB 6125 / NCTC 8237 / Type A).